A 348-amino-acid polypeptide reads, in one-letter code: Mamu class I histocompatibility antigen, alpha chain F (348 aa).

A signal peptide spans 1–21; sequence MAPRTLLLVLSGALALTETWA. The tract at residues 22–113 is alpha-1; that stretch reads GSHSLRYFST…LLLRYNQSEA (92 aa). Topologically, residues 22-307 are extracellular; it reads GSHSLRYFST…ESSSQPTIPI (286 aa). N109 carries N-linked (GlcNAc...) asparagine glycosylation. The alpha-2 stretch occupies residues 114–205; that stretch reads GSHTLQGMNG…ENGKETLQRA (92 aa). 2 disulfide bridges follow: C124-C187 and C226-C282. Residues 206 to 297 form an alpha-3 region; sequence DPPKAHVAHH…GLPQPLTLRW (92 aa). Positions 208–296 constitute an Ig-like C1-type domain; the sequence is PKAHVAHHPI…EGLPQPLTLR (89 aa). The connecting peptide stretch occupies residues 298–307; the sequence is ESSSQPTIPI. Residues 308-331 traverse the membrane as a helical segment; it reads VGIVAGLAVLAVVVTGAVVAAVMW. At 332–348 the chain is on the cytoplasmic side; the sequence is RRKSSDRNRGSYSQPTM.

This sequence belongs to the MHC class I family. Heterodimer of an alpha chain and a beta chain (beta-2-microglobulin).

It localises to the membrane. In terms of biological role, involved in the presentation of foreign antigens to the immune system. This Macaca mulatta (Rhesus macaque) protein is Mamu class I histocompatibility antigen, alpha chain F (Mamu-F).